The chain runs to 341 residues: Probable alcohol acetyltransferase (341 aa).

The N-terminal 40 residues, 1–40, are a transit peptide targeting the mitochondrion; the sequence is MFASRILRNSAQTLKTELPHKETIKMAYDLHKPRSTAIRH. The AB hydrolase-1 domain maps to 48–301; sequence PILFLHGIFG…NSNHDILDQR (254 aa). Catalysis depends on charge relay system residues Ser121, Asp145, and His295.

Belongs to the AB hydrolase superfamily.

It localises to the mitochondrion. Functionally, probable alcohol acetyltransferase that uses acetyl-CoA to synthesize acetate esters from various alcohols. Not involved in the synthesis of ethyl acetate. The polypeptide is Probable alcohol acetyltransferase (EAT2) (Wickerhamomyces anomalus (strain ATCC 58044 / CBS 1984 / NCYC 433 / NRRL Y-366-8) (Yeast)).